A 739-amino-acid chain; its full sequence is MMSNDLLVTDIEAEARTEENIWHSDNSALAAPPAATTSASQDQLPDDRYLNRESSWLDFNARVLALAADNSLPLLERAKFLAIFASNLDEFYMVRVAGLKRRDEMDLSVRSADGLTPREQLSRIGEQTQWIASRHARVFLDSVLPALGEEGIYIVTWTDLDQAERDQLSTYFNEQVFPVLTPLAVDPAHPFPFVSGLSLNLAVTVKQPEDGTQHFARVKVPNNVDRFVELANRGAVRDTSAGDEGQLIHRFLPMEELIAAFLPVLFPGTEIVEHHAFRITRNADFEVEEDRDEDLLQALERELARRRFGSPVRLEIADDMTESMLELLLRELDVHPSDVIEVPGLLDLSSLWQIYGLDRPALKDRAFIPDTHPAFAERETPKSIFATLREGDVLVHHPYHSFATSVQRFIEQATADPDVLAIKQTLYRTSGDSPIVLALIEAAEAGKQVVALVEIKARFDEQANIRWARALEHAGVHVVYGIVGLKTHCKTCLVVRREGPTIRRYCHIGTGNYNSKTARLYEDVGLLTAAPDIGADLTDLFNSLTGYSRKLAYRNLLVAPYGIRRGIIERVEREVAAHRESGPQTGKGLIRLKMNALVDEQVIDALYRASQAGVRVEVVVRGICALRPGTEGFSENIFVRSILGRFLEHSRIIHFRAIDEFWIGSADMMHRNLDRRVEVLAQVKDSRLTAQLDELLKSALDPFTRCWELRPDGQWTASPQKGQQVRDHQESLMERHRSR.

A disordered region spans residues Trp22–Pro45. Positions Ser27 to Ser40 are enriched in low complexity. Asn87 lines the ATP pocket. Mg(2+)-binding residues include Arg428 and Arg458. His488 (phosphohistidine intermediate) is an active-site residue. The ATP site is built by Tyr521, Arg621, and His649. Residues Gln714–Arg739 are disordered. A compositionally biased stretch (basic and acidic residues) spans Gln724–Arg739.

It belongs to the polyphosphate kinase 1 (PPK1) family. It depends on Mg(2+) as a cofactor. In terms of processing, an intermediate of this reaction is the autophosphorylated ppk in which a phosphate is covalently linked to a histidine residue through a N-P bond.

The catalysed reaction is [phosphate](n) + ATP = [phosphate](n+1) + ADP. Catalyzes the reversible transfer of the terminal phosphate of ATP to form a long-chain polyphosphate (polyP). This chain is Polyphosphate kinase, found in Mycobacterium leprae (strain TN).